The chain runs to 671 residues: DNA ligase (671 aa).

NAD(+)-binding positions include 34–38, 83–84, and E113; these read DSEYD and SL. K115 (N6-AMP-lysine intermediate) is an active-site residue. Positions 136, 170, 286, and 310 each coordinate NAD(+). Positions 404, 407, 422, and 427 each coordinate Zn(2+). The BRCT domain occupies 590–671; sequence EEAGVFAGKT…FTQAVEQSEQ (82 aa).

The protein belongs to the NAD-dependent DNA ligase family. LigA subfamily. It depends on Mg(2+) as a cofactor. Requires Mn(2+) as cofactor.

The catalysed reaction is NAD(+) + (deoxyribonucleotide)n-3'-hydroxyl + 5'-phospho-(deoxyribonucleotide)m = (deoxyribonucleotide)n+m + AMP + beta-nicotinamide D-nucleotide.. In terms of biological role, DNA ligase that catalyzes the formation of phosphodiester linkages between 5'-phosphoryl and 3'-hydroxyl groups in double-stranded DNA using NAD as a coenzyme and as the energy source for the reaction. It is essential for DNA replication and repair of damaged DNA. The polypeptide is DNA ligase (Shouchella clausii (strain KSM-K16) (Alkalihalobacillus clausii)).